The chain runs to 422 residues: Probable glycosidase CRR1 (422 aa).

Residues 1 to 20 form the signal peptide; the sequence is MRISILQLVPVVGYIGFALG. A GH16 domain is found at 67–339; it reads DEESCAPIPA…WENSPDIIEK (273 aa). The active-site Nucleophile is the E217. The active-site Proton donor is E221.

Belongs to the glycosyl hydrolase 16 family. CRR1 subfamily.

The protein localises to the spore wall. Its function is as follows. Spore specific glycosidase involved in spore wall assembly during sporulation. May be involved in copper import. In Saccharomyces cerevisiae (strain ATCC 204508 / S288c) (Baker's yeast), this protein is Probable glycosidase CRR1 (CRR1).